Consider the following 358-residue polypeptide: Peptide chain release factor 1 (358 aa).

Q235 is subject to N5-methylglutamine.

The protein belongs to the prokaryotic/mitochondrial release factor family. Methylated by PrmC. Methylation increases the termination efficiency of RF1.

It localises to the cytoplasm. Its function is as follows. Peptide chain release factor 1 directs the termination of translation in response to the peptide chain termination codons UAG and UAA. The sequence is that of Peptide chain release factor 1 from Nitrosospira multiformis (strain ATCC 25196 / NCIMB 11849 / C 71).